Here is a 331-residue protein sequence, read N- to C-terminus: MAAVDRFNLLYREISRSCSVYIEALAIVGAWYTVRKCLTLVFNTYSMIRLHALPKLVGEIDIVKRYGRWAVVTGSTDGIGKAYAEELAKRGVNIILISRSKEKLEAVSRSISETYKVETDFIVADFSKGREAYQAIKEGLKDREIGILVNNVGLFYTYPDYFTNLSEDMLWDMINVNIASANMMVHIVLPGMVEKRKGAIVNVSSASCCQPTPMLTTYGASKAYLDYFSRALYYEYASKGIFVQSLTPFVIATRMVSCSRVTSKRSFFFPSAEEYASHAISTLGLSKRTPGYWKHSIEFTLGERLPEWIWAWFAQYFCRIIRKEALTHKAK.

The tract at residues 2–82 (AAVDRFNLLY…TGSTDGIGKA (81 aa)) is required for mitochondria translocation. NADP(+)-binding positions include 74-80 (GSTDGIG) and aspartate 125. A substrate-binding site is contributed by serine 205. Tyrosine 218 functions as the Proton acceptor in the catalytic mechanism. Position 222 (lysine 222) interacts with NADP(+).

This sequence belongs to the short-chain dehydrogenases/reductases (SDR) family. 17-beta-HSD 3 subfamily.

It localises to the mitochondrion. Its function is as follows. May catalyze the metabolism of steroid hormones and thus play an important role in sex differentiation, the emergence and maintenance of the secondary sexual characters, and the regulation of endocrine. The sequence is that of Hydroxysteroid dehydrogenase-like protein 1 (HSDL1) from Gallus gallus (Chicken).